Here is a 250-residue protein sequence, read N- to C-terminus: Proteasome subunit alpha type-7 (250 aa).

Belongs to the peptidase T1A family. In terms of assembly, the 26S proteasome consists of a 20S proteasome core and two 19S regulatory subunits. The 20S proteasome core is composed of 28 subunits that are arranged in four stacked rings, resulting in a barrel-shaped structure. The two end rings are each formed by seven alpha subunits, and the two central rings are each formed by seven beta subunits. The catalytic chamber with the active sites is on the inside of the barrel.

Its subcellular location is the cytoplasm. The protein localises to the nucleus. Functionally, the proteasome is a multicatalytic proteinase complex which is characterized by its ability to cleave peptides with Arg, Phe, Tyr, Leu, and Glu adjacent to the leaving group at neutral or slightly basic pH. The proteasome has an ATP-dependent proteolytic activity. The sequence is that of Proteasome subunit alpha type-7 (psmA7) from Dictyostelium discoideum (Social amoeba).